Consider the following 305-residue polypeptide: UDP-3-O-acyl-N-acetylglucosamine deacetylase (305 aa).

Residues histidine 79, histidine 238, and aspartate 242 each contribute to the Zn(2+) site. Histidine 265 acts as the Proton donor in catalysis.

It belongs to the LpxC family. The cofactor is Zn(2+).

It catalyses the reaction a UDP-3-O-[(3R)-3-hydroxyacyl]-N-acetyl-alpha-D-glucosamine + H2O = a UDP-3-O-[(3R)-3-hydroxyacyl]-alpha-D-glucosamine + acetate. The protein operates within glycolipid biosynthesis; lipid IV(A) biosynthesis; lipid IV(A) from (3R)-3-hydroxytetradecanoyl-[acyl-carrier-protein] and UDP-N-acetyl-alpha-D-glucosamine: step 2/6. Functionally, catalyzes the hydrolysis of UDP-3-O-myristoyl-N-acetylglucosamine to form UDP-3-O-myristoylglucosamine and acetate, the committed step in lipid A biosynthesis. The polypeptide is UDP-3-O-acyl-N-acetylglucosamine deacetylase (Edwardsiella ictaluri (strain 93-146)).